The sequence spans 323 residues: Thymidylate synthase (323 aa).

Residues Arg21 and 172 to 173 (RR) each bind dUMP. The Nucleophile role is filled by Cys192. Residues 214 to 217 (RSND), Asn225, and 255 to 257 (HVY) contribute to the dUMP site. Asp217 is a binding site for (6R)-5,10-methylene-5,6,7,8-tetrahydrofolate. Ala322 provides a ligand contact to (6R)-5,10-methylene-5,6,7,8-tetrahydrofolate.

The protein belongs to the thymidylate synthase family. Bacterial-type ThyA subfamily. Homodimer.

The protein resides in the cytoplasm. The catalysed reaction is dUMP + (6R)-5,10-methylene-5,6,7,8-tetrahydrofolate = 7,8-dihydrofolate + dTMP. It functions in the pathway pyrimidine metabolism; dTTP biosynthesis. Its function is as follows. Catalyzes the reductive methylation of 2'-deoxyuridine-5'-monophosphate (dUMP) to 2'-deoxythymidine-5'-monophosphate (dTMP) while utilizing 5,10-methylenetetrahydrofolate (mTHF) as the methyl donor and reductant in the reaction, yielding dihydrofolate (DHF) as a by-product. This enzymatic reaction provides an intracellular de novo source of dTMP, an essential precursor for DNA biosynthesis. The chain is Thymidylate synthase from Bordetella parapertussis (strain 12822 / ATCC BAA-587 / NCTC 13253).